Consider the following 242-residue polypeptide: Immunity protein TsiV2 (242 aa).

Helical transmembrane passes span 39–59 (VFGAISAGIVPLWPFIFFADI), 66–86 (FWGFICFSLAGMAAARYLFMP), and 118–138 (FAWVGIAVCLLALAVVGPLAF).

The protein localises to the host membrane. Functionally, immunity protein that plays a role in preventing early activation of toxin VasX. The chain is Immunity protein TsiV2 from Vibrio cholerae serotype O1 (strain ATCC 39315 / El Tor Inaba N16961).